We begin with the raw amino-acid sequence, 144 residues long: Large ribosomal subunit protein uL15 (144 aa).

The interval 1–25 (MFLNTIGARDGSRPEKKRVGRGIGS) is disordered.

It belongs to the universal ribosomal protein uL15 family. In terms of assembly, part of the 50S ribosomal subunit.

In terms of biological role, binds to the 23S rRNA. The protein is Large ribosomal subunit protein uL15 of Methylococcus capsulatus (strain ATCC 33009 / NCIMB 11132 / Bath).